Reading from the N-terminus, the 175-residue chain is Large ribosomal subunit protein bL17 (175 aa).

Residues 127–175 (GEAEAATKRAVKEDALKKDEAPAAESVEDAKPAEDAPAAEAADDKGKDA) are disordered. The segment covering 131-147 (AATKRAVKEDALKKDEA) has biased composition (basic and acidic residues).

It belongs to the bacterial ribosomal protein bL17 family. As to quaternary structure, part of the 50S ribosomal subunit. Contacts protein L32.

This is Large ribosomal subunit protein bL17 from Streptomyces griseus subsp. griseus (strain JCM 4626 / CBS 651.72 / NBRC 13350 / KCC S-0626 / ISP 5235).